The primary structure comprises 346 residues: Superficial pseudohyphal growth protein 1 (346 aa).

Residues Asn-289–Ala-308 form a disordered region. The segment covering Gly-291–Pro-305 has biased composition (acidic residues).

The protein localises to the nucleus. Probable transcription factor required for superficial pseudohyphal development in response to nitrogen starvation. This is Superficial pseudohyphal growth protein 1 (SFG1) from Saccharomyces cerevisiae (strain ATCC 204508 / S288c) (Baker's yeast).